Here is a 272-residue protein sequence, read N- to C-terminus: Dihydropteroate synthase (272 aa).

The 256-residue stretch at 1 to 256 (MIKTKIMGIL…NVLLNTRLAQ (256 aa)) folds into the Pterin-binding domain. Asn11 lines the Mg(2+) pocket. (7,8-dihydropterin-6-yl)methyl diphosphate is bound by residues Thr51, Asp89, Asn108, Asp172, Lys208, and 244-246 (RVH).

This sequence belongs to the DHPS family. As to quaternary structure, homodimer. Mg(2+) serves as cofactor.

It carries out the reaction (7,8-dihydropterin-6-yl)methyl diphosphate + 4-aminobenzoate = 7,8-dihydropteroate + diphosphate. Its pathway is cofactor biosynthesis; tetrahydrofolate biosynthesis; 7,8-dihydrofolate from 2-amino-4-hydroxy-6-hydroxymethyl-7,8-dihydropteridine diphosphate and 4-aminobenzoate: step 1/2. Its function is as follows. Catalyzes the condensation of para-aminobenzoate (pABA) with 6-hydroxymethyl-7,8-dihydropterin diphosphate (DHPt-PP) to form 7,8-dihydropteroate (H2Pte), the immediate precursor of folate derivatives. The sequence is that of Dihydropteroate synthase (folP) from Staphylococcus epidermidis (strain ATCC 12228 / FDA PCI 1200).